The sequence spans 61 residues: Insect toxin AaHIT5 (61 aa).

The 61-residue stretch at 1–61 (DGYIKRHDGC…AWKSETNTCD (61 aa)) folds into the LCN-type CS-alpha/beta domain. Disulfide bonds link Cys10–Cys60, Cys14–Cys35, Cys21–Cys42, and Cys25–Cys44.

As to expression, expressed by the venom gland.

It localises to the secreted. Excitatory insect toxins induce a spastic paralysis. They bind voltage-independently to sodium channels (Nav) and shift the voltage of activation toward more negative potentials thereby affecting sodium channel activation and promoting spontaneous and repetitive firing. This toxin elicits excitatory activity with no flaccid paralysis despite its high degree of sequence similarity with other depressant insect toxins. This toxin is active only on insects. The chain is Insect toxin AaHIT5 from Androctonus australis (Sahara scorpion).